The primary structure comprises 363 residues: Chorismate synthase (363 aa).

R47 is a binding site for NADP(+). Residues R124 to S126, G285, K300 to T304, and R326 each bind FMN.

This sequence belongs to the chorismate synthase family. As to quaternary structure, homotetramer. Requires FMNH2 as cofactor.

It carries out the reaction 5-O-(1-carboxyvinyl)-3-phosphoshikimate = chorismate + phosphate. It functions in the pathway metabolic intermediate biosynthesis; chorismate biosynthesis; chorismate from D-erythrose 4-phosphate and phosphoenolpyruvate: step 7/7. Catalyzes the anti-1,4-elimination of the C-3 phosphate and the C-6 proR hydrogen from 5-enolpyruvylshikimate-3-phosphate (EPSP) to yield chorismate, which is the branch point compound that serves as the starting substrate for the three terminal pathways of aromatic amino acid biosynthesis. This reaction introduces a second double bond into the aromatic ring system. The polypeptide is Chorismate synthase (Opitutus terrae (strain DSM 11246 / JCM 15787 / PB90-1)).